Reading from the N-terminus, the 92-residue chain is Large ribosomal subunit protein bL27 (92 aa).

The interval 1–21 is disordered; that stretch reads MSKKKGVGSSRNGRDSESKRL. Residues 12 to 21 show a composition bias toward basic and acidic residues; it reads NGRDSESKRL.

This sequence belongs to the bacterial ribosomal protein bL27 family.

The sequence is that of Large ribosomal subunit protein bL27 from Halothermothrix orenii (strain H 168 / OCM 544 / DSM 9562).